Consider the following 108-residue polypeptide: Nucleoid-associated protein Csal_1459 (108 aa).

A compositionally biased stretch (basic and acidic residues) spans 84 to 93 (EETSRGRMEE). The tract at residues 84–108 (EETSRGRMEEATEGMNLPPGFKMPF) is disordered.

The protein belongs to the YbaB/EbfC family. As to quaternary structure, homodimer.

The protein resides in the cytoplasm. The protein localises to the nucleoid. Its function is as follows. Binds to DNA and alters its conformation. May be involved in regulation of gene expression, nucleoid organization and DNA protection. The chain is Nucleoid-associated protein Csal_1459 from Chromohalobacter salexigens (strain ATCC BAA-138 / DSM 3043 / CIP 106854 / NCIMB 13768 / 1H11).